Here is a 520-residue protein sequence, read N- to C-terminus: Tetratricopeptide repeat protein 6 (520 aa).

TPR repeat units lie at residues 57–90 (MTMC…ISHS), 101–138 (ADCL…DKNS), 139–172 (YTAF…DATE), 176–209 (LNTF…SRTN), 210–243 (GSLC…NPCF), 245–280 (DAYV…NPAY), 281–314 (IKAR…DPKN), 320–347 (GRAV…ISTT), 348–381 (AEFL…NPKY), 382–415 (SLAY…DPEN), 416–449 (EYVL…CPFW), 450–483 (AAVY…KPND), and 484–517 (ALVY…EDYA).

In Homo sapiens (Human), this protein is Tetratricopeptide repeat protein 6.